Consider the following 275-residue polypeptide: Tropinone reductase-like 2 (275 aa).

Position 17–41 (17–41) interacts with NAD(+); that stretch reads IITGGASGIGACTAELFHENGAKVV. Ser150 serves as a coordination point for substrate. Residue Tyr163 is the Proton acceptor of the active site.

Belongs to the short-chain dehydrogenases/reductases (SDR) family.

Functionally, has no tropinone reductase activity. The polypeptide is Tropinone reductase-like 2 (Erythroxylum coca (Coca plant)).